The following is a 223-amino-acid chain: PKHD-type hydroxylase syc1482_d (223 aa).

Residues 78 to 176 (RVHSLLFSRY…RFACVGWVQS (99 aa)) enclose the Fe2OG dioxygenase domain. Fe cation-binding residues include His-96, Asp-98, and His-157. 2-oxoglutarate is bound at residue Arg-167.

It depends on Fe(2+) as a cofactor. The cofactor is L-ascorbate.

The sequence is that of PKHD-type hydroxylase syc1482_d from Synechococcus sp. (strain ATCC 27144 / PCC 6301 / SAUG 1402/1) (Anacystis nidulans).